A 391-amino-acid chain; its full sequence is Phosphoglycerate kinase (391 aa).

Residues 21-23 (DLN), Arg-36, 59-62 (HLGR), Arg-113, and Arg-146 contribute to the substrate site. ATP contacts are provided by residues Lys-197, Glu-319, and 345 to 348 (GGDT).

Belongs to the phosphoglycerate kinase family. As to quaternary structure, monomer.

The protein localises to the cytoplasm. The enzyme catalyses (2R)-3-phosphoglycerate + ATP = (2R)-3-phospho-glyceroyl phosphate + ADP. It participates in carbohydrate degradation; glycolysis; pyruvate from D-glyceraldehyde 3-phosphate: step 2/5. In Shewanella baltica (strain OS155 / ATCC BAA-1091), this protein is Phosphoglycerate kinase.